A 100-amino-acid polypeptide reads, in one-letter code: Urease subunit gamma (100 aa).

It belongs to the urease gamma subunit family. Heterotrimer of UreA (gamma), UreB (beta) and UreC (alpha) subunits. Three heterotrimers associate to form the active enzyme.

The protein localises to the cytoplasm. It carries out the reaction urea + 2 H2O + H(+) = hydrogencarbonate + 2 NH4(+). Its pathway is nitrogen metabolism; urea degradation; CO(2) and NH(3) from urea (urease route): step 1/1. The sequence is that of Urease subunit gamma from Prochlorococcus marinus (strain MIT 9215).